The following is a 204-amino-acid chain: Recombination protein RecR (204 aa).

Residues 58 to 75 form a C4-type zinc finger; sequence CSVCQNVTDREEDPCSIC. One can recognise a Toprim domain in the interval 83–181; sequence TVICVVESPV…EVTKIARGIP (99 aa).

It belongs to the RecR family.

Its function is as follows. May play a role in DNA repair. It seems to be involved in an RecBC-independent recombinational process of DNA repair. It may act with RecF and RecO. This chain is Recombination protein RecR, found in Chlorobium luteolum (strain DSM 273 / BCRC 81028 / 2530) (Pelodictyon luteolum).